The sequence spans 331 residues: GTP 3',8-cyclase (331 aa).

The 231-residue stretch at 1–231 folds into the Radical SAM core domain; that stretch reads MNAVDYLRIS…DGQVQGNGPA (231 aa). A GTP-binding site is contributed by arginine 8. Cysteine 15 and cysteine 19 together coordinate [4Fe-4S] cluster. Position 21 (tyrosine 21) interacts with S-adenosyl-L-methionine. Cysteine 22 contributes to the [4Fe-4S] cluster binding site. Arginine 60 is a binding site for GTP. Glycine 64 contacts S-adenosyl-L-methionine. Residue threonine 91 participates in GTP binding. Serine 115 is an S-adenosyl-L-methionine binding site. Residue lysine 157 coordinates GTP. Methionine 191 is an S-adenosyl-L-methionine binding site. Residues cysteine 254 and cysteine 257 each contribute to the [4Fe-4S] cluster site. Position 259-261 (259-261) interacts with GTP; that stretch reads RMR. Residue cysteine 271 coordinates [4Fe-4S] cluster.

This sequence belongs to the radical SAM superfamily. MoaA family. In terms of assembly, monomer and homodimer. It depends on [4Fe-4S] cluster as a cofactor.

It carries out the reaction GTP + AH2 + S-adenosyl-L-methionine = (8S)-3',8-cyclo-7,8-dihydroguanosine 5'-triphosphate + 5'-deoxyadenosine + L-methionine + A + H(+). It functions in the pathway cofactor biosynthesis; molybdopterin biosynthesis. In terms of biological role, catalyzes the cyclization of GTP to (8S)-3',8-cyclo-7,8-dihydroguanosine 5'-triphosphate. The chain is GTP 3',8-cyclase from Acaryochloris marina (strain MBIC 11017).